The chain runs to 488 residues: Serine/threonine-protein kinase haspin homolog hrk1 (488 aa).

The 333-residue stretch at 156–488 (TFEIQKIGEA…SLLNWVRQKY (333 aa)) folds into the Protein kinase domain. ATP-binding positions include 162-170 (IGEASYSEV) and Lys184. Asp305 acts as the Proton acceptor in catalysis.

The protein belongs to the protein kinase superfamily. Ser/Thr protein kinase family. Haspin subfamily. As to quaternary structure, interacts with pds5 and swi6.

The protein resides in the cytoplasm. It localises to the chromosome. The enzyme catalyses L-seryl-[protein] + ATP = O-phospho-L-seryl-[protein] + ADP + H(+). It carries out the reaction L-threonyl-[protein] + ATP = O-phospho-L-threonyl-[protein] + ADP + H(+). Serine/threonine haspin-like protein kinase involved in cell cycle regulation. Acts in chromosomal passenger complex (CPC) targeting to centromeres by phosphorylating histone H3 at 'Thr3' (H3T3ph). This is Serine/threonine-protein kinase haspin homolog hrk1 (hrk1) from Schizosaccharomyces pombe (strain 972 / ATCC 24843) (Fission yeast).